Here is a 122-residue protein sequence, read N- to C-terminus: Large ribosomal subunit protein uL14 (122 aa).

The protein belongs to the universal ribosomal protein uL14 family. As to quaternary structure, part of the 50S ribosomal subunit. Forms a cluster with proteins L3 and L19. In the 70S ribosome, L14 and L19 interact and together make contacts with the 16S rRNA in bridges B5 and B8.

Its function is as follows. Binds to 23S rRNA. Forms part of two intersubunit bridges in the 70S ribosome. This chain is Large ribosomal subunit protein uL14, found in Helicobacter pylori (strain J99 / ATCC 700824) (Campylobacter pylori J99).